A 455-amino-acid polypeptide reads, in one-letter code: Maintenance of telomere capping protein 1 (455 aa).

Disordered regions lie at residues 1–113 (MAET…SATP) and 296–317 (AKKM…EDAS). The span at 27–38 (PTSKEFNNDDSK) shows a compositional bias: basic and acidic residues. Residues 80 to 113 (VAATSNERQQHDASNQPSQAAQTTINKNTESATP) show a composition bias toward polar residues. Over residues 296 to 305 (AKKMNKENKQ) the composition is skewed to basic and acidic residues.

It belongs to the MTC1 family.

It localises to the cytoplasm. Its function is as follows. Involved in telomere capping. This chain is Maintenance of telomere capping protein 1, found in Schizosaccharomyces pombe (strain 972 / ATCC 24843) (Fission yeast).